Consider the following 224-residue polypeptide: Phosphoglycolate phosphatase (224 aa).

Aspartate 8 (nucleophile) is an active-site residue. Residues aspartate 8 and aspartate 10 each contribute to the Mg(2+) site. A substrate-binding site is contributed by lysine 151. Mg(2+)-binding residues include aspartate 174 and aspartate 178.

The protein belongs to the archaeal SPP-like hydrolase family. Requires Mg(2+) as cofactor.

The enzyme catalyses 2-phosphoglycolate + H2O = glycolate + phosphate. Its function is as follows. Catalyzes the dephosphorylation of 2-phosphoglycolate. This Thermoplasma volcanium (strain ATCC 51530 / DSM 4299 / JCM 9571 / NBRC 15438 / GSS1) protein is Phosphoglycolate phosphatase.